The primary structure comprises 191 residues: CASP-like protein 4C3 (191 aa).

Residues 1 to 29 lie on the Cytoplasmic side of the membrane; that stretch reads METGDSAVKSSQDVHYYGKSTAQKHRRSN. The chain crosses the membrane as a helical span at residues 30–50; the sequence is GIILIFRALTFSFSLTSVIVM. Topologically, residues 51-72 are extracellular; sequence GTNRHRIDAQSRVAWYDFDPFR. The helical transmembrane segment at 73 to 93 threads the bilayer; sequence YVLAVNAIICIYSFVEIWLAV. Residues 94–116 lie on the Cytoplasmic side of the membrane; that stretch reads YTYLKDTLFLPETFQVWFDYGHD. The chain crosses the membrane as a helical span at residues 117–137; that stretch reads QGFAYLLFSANSAGIAMAQLL. The Extracellular segment spans residues 138–162; that stretch reads QSGNSLIHGAYRCSDAGVFCTQARA. A helical membrane pass occupies residues 163 to 183; sequence SIGLGFGAFLFLALSSLLTGL. At 184-191 the chain is on the cytoplasmic side; that stretch reads RVARWYFS.

This sequence belongs to the Casparian strip membrane proteins (CASP) family. As to quaternary structure, homodimer and heterodimers.

The protein resides in the cell membrane. The chain is CASP-like protein 4C3 from Physcomitrium patens (Spreading-leaved earth moss).